The sequence spans 406 residues: Tryptophan synthase beta chain (406 aa).

An N6-(pyridoxal phosphate)lysine modification is found at lysine 99.

The protein belongs to the TrpB family. Tetramer of two alpha and two beta chains. Requires pyridoxal 5'-phosphate as cofactor.

It carries out the reaction (1S,2R)-1-C-(indol-3-yl)glycerol 3-phosphate + L-serine = D-glyceraldehyde 3-phosphate + L-tryptophan + H2O. It participates in amino-acid biosynthesis; L-tryptophan biosynthesis; L-tryptophan from chorismate: step 5/5. In terms of biological role, the beta subunit is responsible for the synthesis of L-tryptophan from indole and L-serine. This Rhizobium johnstonii (strain DSM 114642 / LMG 32736 / 3841) (Rhizobium leguminosarum bv. viciae) protein is Tryptophan synthase beta chain.